Reading from the N-terminus, the 159-residue chain is Phosphopantetheine adenylyltransferase (159 aa).

Serine 8 provides a ligand contact to substrate. Residues 8-9 and histidine 16 each bind ATP; that span reads SF. Substrate contacts are provided by lysine 40, leucine 72, and arginine 86. Residues 87–89, glutamate 97, and 122–128 each bind ATP; these read GLR and YSFISSS.

It belongs to the bacterial CoaD family. Homohexamer. It depends on Mg(2+) as a cofactor.

It is found in the cytoplasm. The catalysed reaction is (R)-4'-phosphopantetheine + ATP + H(+) = 3'-dephospho-CoA + diphosphate. The protein operates within cofactor biosynthesis; coenzyme A biosynthesis; CoA from (R)-pantothenate: step 4/5. Functionally, reversibly transfers an adenylyl group from ATP to 4'-phosphopantetheine, yielding dephospho-CoA (dPCoA) and pyrophosphate. This Thermosipho melanesiensis (strain DSM 12029 / CIP 104789 / BI429) protein is Phosphopantetheine adenylyltransferase.